Reading from the N-terminus, the 553-residue chain is General alpha-glucoside permease (553 aa).

Over residues 1-21 (MSVDENQLENGQLLSSENEAS) the composition is skewed to polar residues. A disordered region spans residues 1-26 (MSVDENQLENGQLLSSENEASSPFKE). The Cytoplasmic portion of the chain corresponds to 1–33 (MSVDENQLENGQLLSSENEASSPFKESIPSRSS). Residues 34-54 (LYLIALTVSLLGVQLTWSVEL) form a helical membrane-spanning segment. Residues 55 to 72 (GYGTPYLFSLGLRKEWTS) are Extracellular-facing. A helical transmembrane segment spans residues 73 to 93 (IIWIAGPLTGILIQPIAGILS). The Cytoplasmic portion of the chain corresponds to 94–111 (DRVNSRIGRRRPFMLCAS). A helical transmembrane segment spans residues 112 to 132 (LLGTFSLFLMGWAPDICLFIF). The Extracellular segment spans residues 133–140 (SNEVLMKR). The chain crosses the membrane as a helical span at residues 141–161 (VTIVLATISIYLLDVAVNVVM). Topologically, residues 162-186 (ASTRSLIVDSVRSDQQHEANSWAGR) are cytoplasmic. The chain crosses the membrane as a helical span at residues 187-207 (MIGVGNVLGYLLGYLPLYRIF). Topologically, residues 208 to 216 (SFLNFTQLQ) are extracellular. A helical transmembrane segment spans residues 217–237 (VFCVLASISLVLTVTITTIFV). Residues 238–280 (SERRFPPVEHEKSVAGEIFEFFTTMRQSITALPFTLKRICFVQ) are Cytoplasmic-facing. The chain crosses the membrane as a helical span at residues 281–301 (FFAYFGWFPFLFYITTYVGIL). The Extracellular segment spans residues 302 to 322 (YLRHAPKGHEEDWDMATRQGS). Residues 323–343 (FALLLFAIISLAANTALPLLL) form a helical membrane-spanning segment. Over 344-424 (EDTEDDEEDE…SKVQIKGLTL (81 aa)) the chain is Cytoplasmic. The tract at residues 368-399 (NDLGNIRTGTNTPRLGNLSETTSFRSENEPSR) is disordered. Positions 374-392 (RTGTNTPRLGNLSETTSFR) are enriched in polar residues. The helical transmembrane segment at 425-445 (PILWLSSHVLFGVCMLSTIFL) threads the bilayer. Over 446-452 (QTSWQAQ) the chain is Extracellular. The helical transmembrane segment at 453 to 473 (AMVAICGLSWACTLWIPYSLF) threads the bilayer. Topologically, residues 474–494 (SSEIGKLGLRESSGKMIGVHN) are cytoplasmic. Residues 495–515 (VFISAPQVLSTIIATIVFIQS) form a helical membrane-spanning segment. At 516 to 521 (EGSHRD) the chain is on the extracellular side. Residues 522–542 (IADNSIAWVLRIGGISAFLAA) traverse the membrane as a helical segment. Topologically, residues 543–553 (YQCRHLLPINF) are cytoplasmic.

It belongs to the glycoside-pentoside-hexuronide (GPH) cation symporter transporter (TC 2.A.2.4) family.

The protein resides in the membrane. Responsible for the transport of maltose and sucrose into the cell, with the concomitant uptake of protons (symport system). The protein is General alpha-glucoside permease (sut1) of Schizosaccharomyces pombe (strain 972 / ATCC 24843) (Fission yeast).